A 260-amino-acid chain; its full sequence is Indole-3-glycerol phosphate synthase (260 aa).

The protein belongs to the TrpC family.

It carries out the reaction 1-(2-carboxyphenylamino)-1-deoxy-D-ribulose 5-phosphate + H(+) = (1S,2R)-1-C-(indol-3-yl)glycerol 3-phosphate + CO2 + H2O. It participates in amino-acid biosynthesis; L-tryptophan biosynthesis; L-tryptophan from chorismate: step 4/5. This is Indole-3-glycerol phosphate synthase from Thermoanaerobacter pseudethanolicus (strain ATCC 33223 / 39E) (Clostridium thermohydrosulfuricum).